Consider the following 389-residue polypeptide: Geodin cluster transcriptional coactivator gedD (389 aa).

An HTH iclR-type domain is found at 13-83 (LAWHVQLLAC…QPGQIMHTPL (71 aa)). A DNA-binding region (H-T-H motif) is located at residues 43 to 62 (VRDLAQLCGVSETTLSRVVR).

The protein localises to the nucleus. Functionally, transcriptional coactivator; part of the gene cluster that mediates the biosynthesis of geodin, an intermediate in the biosynthesis of other natural products. With gedR, coregulates the production of geodin. This is Geodin cluster transcriptional coactivator gedD (gedD) from Aspergillus terreus (strain NIH 2624 / FGSC A1156).